Consider the following 440-residue polypeptide: T-box transcription factor T homolog 2 (440 aa).

The segment at residues 44–215 is a DNA-binding region (T-box); it reads LWEKFKSLTN…HNPFAKAFLD (172 aa). Disordered regions lie at residues 282 to 303 and 393 to 440; these read APYPHPYQRSSPPTNYGHDTAA and TTAS…MPSM. The span at 409–440 shows a compositional bias: polar residues; it reads STDSGYGHSTTPPAPQTRITSNNWSPMTMPSM.

In terms of tissue distribution, mesoderm and notochord.

It localises to the nucleus. Involved in the transcriptional regulation of genes required for mesoderm formation and differentiation. The protein is T-box transcription factor T homolog 2 of Branchiostoma floridae (Florida lancelet).